The chain runs to 212 residues: Ribosomal RNA small subunit methyltransferase G (212 aa).

S-adenosyl-L-methionine contacts are provided by residues Gly72, Leu77, 123–124 (VE), and Arg138.

This sequence belongs to the methyltransferase superfamily. RNA methyltransferase RsmG family.

It is found in the cytoplasm. It carries out the reaction guanosine(527) in 16S rRNA + S-adenosyl-L-methionine = N(7)-methylguanosine(527) in 16S rRNA + S-adenosyl-L-homocysteine. In terms of biological role, specifically methylates the N7 position of guanine in position 527 of 16S rRNA. The protein is Ribosomal RNA small subunit methyltransferase G of Histophilus somni (strain 2336) (Haemophilus somnus).